Here is a 504-residue protein sequence, read N- to C-terminus: Protein FMP42 (504 aa).

At 1–11 (MTSTRTLRYAQ) the chain is on the vacuolar side. The helical transmembrane segment at 12–32 (VACACIWCLFSAGIIFGFAAL) threads the bilayer. Residues 33-64 (KPILISEGVYHELCDPKDGDRLLCTAQDLKLN) lie on the Cytoplasmic side of the membrane. A helical transmembrane segment spans residues 65 to 85 (FIFALSATVTNIMALPVGKIL). Residues 86–91 (DMYGPR) lie on the Vacuolar side of the membrane. The chain crosses the membrane as a helical span at residues 92–112 (VCGIIGSCLLFLASGNFISAK). Over 113-119 (HLVSLWD) the chain is Cytoplasmic. Residues 120-140 (PYLVGYTLLAVAGPFVFISCF) traverse the membrane as a helical segment. Topologically, residues 141-150 (QLANSFPQRS) are vacuolar. The helical transmembrane segment at 151–171 (GTVLALLTGSFDSSSALFLLY) threads the bilayer. Topologically, residues 172 to 186 (RLLYQNWFPTLNVSR) are cytoplasmic. Residues 187–207 (FFTLYLIVPVFILACQLTIMP) form a helical membrane-spanning segment. Over 208–302 (HSSYKTVNHI…KSAYEQIKSP (95 aa)) the chain is Vacuolar. 3 positions are modified to phosphoserine: Ser238, Ser249, and Ser269. The chain crosses the membrane as a helical span at residues 303–323 (WFYLMLLFALVAMLRINYFIA). Over 324–344 (TVRTQEEYLLNDPDLALKLNS) the chain is Cytoplasmic. A helical transmembrane segment spans residues 345–365 (IFDMLLPLGGAVSIPFIGLLL). The Vacuolar portion of the chain corresponds to 366 to 385 (DHTDTLSTLTILFTTSTAIG). A helical membrane pass occupies residues 386–406 (VFGLIPNSFTWNLIGIVLLVV). The Cytoplasmic portion of the chain corresponds to 407–421 (YRPFYYTVVSDYSSK). Residues 422–442 (VFGFDTFGTVYGLLSCICGIF) traverse the membrane as a helical segment. The Vacuolar segment spans residues 443-462 (NMSQNLLDKWTHTTFNMNPF). Residues 463 to 483 (PINLTLVILTVVFSLTLTFYI) form a helical membrane-spanning segment. The Cytoplasmic portion of the chain corresponds to 484 to 504 (RSQILPKPVNERGLSSNYQTI).

The protein belongs to the SLC43A transporter (TC 2.A.1.44) family.

Its subcellular location is the vacuole membrane. The sequence is that of Protein FMP42 (FMP42) from Saccharomyces cerevisiae (strain ATCC 204508 / S288c) (Baker's yeast).